Here is a 1387-residue protein sequence, read N- to C-terminus: DNA-directed RNA polymerase subunit beta'' (1387 aa).

C220, C291, C298, and C301 together coordinate Zn(2+).

It belongs to the RNA polymerase beta' chain family. RpoC2 subfamily. As to quaternary structure, in plastids the minimal PEP RNA polymerase catalytic core is composed of four subunits: alpha, beta, beta', and beta''. When a (nuclear-encoded) sigma factor is associated with the core the holoenzyme is formed, which can initiate transcription. Zn(2+) is required as a cofactor.

Its subcellular location is the plastid. The protein resides in the chloroplast. The catalysed reaction is RNA(n) + a ribonucleoside 5'-triphosphate = RNA(n+1) + diphosphate. In terms of biological role, DNA-dependent RNA polymerase catalyzes the transcription of DNA into RNA using the four ribonucleoside triphosphates as substrates. The protein is DNA-directed RNA polymerase subunit beta'' of Carica papaya (Papaya).